An 85-amino-acid polypeptide reads, in one-letter code: F(1)-ATPase inhibitor IF(1), mitochondrial (85 aa).

A mitochondrion-targeting transit peptide spans Met-1 to Tyr-22. A coiled-coil region spans residues Lys-41–Thr-84.

This sequence belongs to the ATPase inhibitor family. In terms of assembly, monomer and homodimer. The protein aggregates less strongly with increasing pH.

It is found in the mitochondrion. In terms of biological role, endogenous ATPase inhibitor, which inhibits specifically the reverse ATPase reaction of mitochondrial F(1)F(0)-type ATP synthase. It limits ATP depletion when the mitochondrial membrane potential falls below a threshold and the F(1)F(0)-ATP synthase starts hydrolyzing ATP to pump protons out of the mitochondrial matrix. Required to avoid the consumption of cellular ATP when the F(1)F(0)-ATP synthase enzyme acts as an ATP hydrolase. Functions through inserting its N-terminal part into the catalytically active F1-ATPase, thereby blocking its rotational movement and subsequently the ATP hydrolase activity. This chain is F(1)-ATPase inhibitor IF(1), mitochondrial (INH1), found in Saccharomyces cerevisiae (strain ATCC 204508 / S288c) (Baker's yeast).